Reading from the N-terminus, the 94-residue chain is Neutrophil defensin 1 (94 aa).

A signal peptide spans 1 to 19 (MRTLAILAAILLVALQAQA). Positions 20–64 (EPLQARADEVAAAPEQIPADNPEVVVSLAWDESLAPKHPGSRKNV) are excised as a propeptide. 3 disulfide bridges follow: cysteine 66–cysteine 94, cysteine 68–cysteine 83, and cysteine 73–cysteine 93. ADP-ribosylarginine; by ART1 is present on arginine 78. Tyrosine 85 bears the Phosphotyrosine mark. Arginine 88 is modified (ADP-ribosylarginine; by ART1).

The protein belongs to the alpha-defensin family. As to quaternary structure, tetramer. Dimer. Interacts with RETN. In terms of processing, ADP-ribosylation drastically reduces cytotoxic and antibacterial activities, and enhances IL8 production.

It is found in the secreted. Effector molecule of the innate immune system that acts via antibiotic-like properties against a broad array of infectious agents including bacteria, fungi, and viruses or by promoting the activation and maturation of some APCs. Interacts with the essential precursor of cell wall synthesis lipid II to inhibit bacterial cell wall synthesis. Inhibits adenovirus infection via inhibition of viral disassembly at the vertex region, thereby restricting the release of internal capsid protein pVI, which is required for endosomal membrane penetration during cell entry. In addition, interaction with adenovirus capsid leads to the redirection of viral particles to TLR4 thereby promoting a NLRP3-mediated inflammasome response and interleukin 1-beta (IL-1beta) release. Induces the production of proinflammatory cytokines including type I interferon (IFN) in plasmacytoid dendritic cells (pDCs) by triggering the degradation of NFKBIA and nuclear translocation of IRF1, both of which are required for activation of pDCs. The sequence is that of Neutrophil defensin 1 (DEFA1) from Pan troglodytes (Chimpanzee).